The sequence spans 95 residues: MPRSLKKGPFVDDHLLKKVDAQNERKDKRVIKTWSRRSTIVPEMIGHTIAVHNGKQHVPVFVNEQMIGHKLGEFSPTRSYRGHGADKNAKGSKKK.

Residues 73–95 (EFSPTRSYRGHGADKNAKGSKKK) form a disordered region.

This sequence belongs to the universal ribosomal protein uS19 family.

Functionally, protein S19 forms a complex with S13 that binds strongly to the 16S ribosomal RNA. The polypeptide is Small ribosomal subunit protein uS19 (Deinococcus deserti (strain DSM 17065 / CIP 109153 / LMG 22923 / VCD115)).